Here is a 214-residue protein sequence, read N- to C-terminus: Ribosomal RNA small subunit methyltransferase G (214 aa).

S-adenosyl-L-methionine is bound by residues glycine 81, methionine 86, 132-133 (AE), and arginine 147.

The protein belongs to the methyltransferase superfamily. RNA methyltransferase RsmG family.

It localises to the cytoplasm. The enzyme catalyses guanosine(527) in 16S rRNA + S-adenosyl-L-methionine = N(7)-methylguanosine(527) in 16S rRNA + S-adenosyl-L-homocysteine. Its function is as follows. Specifically methylates the N7 position of guanine in position 527 of 16S rRNA. The chain is Ribosomal RNA small subunit methyltransferase G from Pseudomonas syringae pv. syringae (strain B728a).